The primary structure comprises 359 residues: GalNAc-alpha-(1-&gt;4)-GalNAc-alpha-(1-&gt;3)-diNAcBac-PP-undecaprenol alpha-1,4-N-acetyl-D-galactosaminyltransferase (359 aa).

Glu17 is a binding site for substrate. Tyr45 lines the UDP-N-acetyl-alpha-D-galactosamine pocket. 71 to 74 (RFKK) is a substrate binding site. Residues His117, Arg190, Lys195, Val246, and 266 to 274 (EGLPTVLIE) each bind UDP-N-acetyl-alpha-D-galactosamine. Arg190 contacts substrate.

This sequence belongs to the glycosyltransferase group 1 family.

It localises to the cell inner membrane. The enzyme catalyses N-acetyl-alpha-D-galactosaminyl-(1-&gt;4)-N-acetyl-alpha-D-galactosaminyl-(1-&gt;3)-N,N'-diacetyl-alpha-D-bacillosaminyl-tri-trans,heptacis-undecaprenyl diphosphate + 3 UDP-N-acetyl-alpha-D-galactosamine = [alpha-D-GalNAc-(1-&gt;4)]4-alpha-D-GalNAc-(1-&gt;3)-alpha-D-diNAcBac-tri-trans,hepta-cis-undecaprenyl diphosphate + 3 UDP + 3 H(+). It functions in the pathway protein modification; protein glycosylation. Processive glycosyltransferase that is part of the biosynthetic pathway of the lipid-linked oligosaccharide (LLO) that serves as the glycan donor in bacterial protein N-glycosylation. Catalyzes the transfer of exactly three alpha-(1-&gt;4)-N-acetylgalactosamine (GalNAc) units to the growing LLO precursor, GalNAc-alpha-(1-&gt;4)-GalNAc-alpha-(1-&gt;3)-diNAcBac-PP-undecaprenyl. Cannot accept UDP-GlcNAc as substrate. This is GalNAc-alpha-(1-&gt;4)-GalNAc-alpha-(1-&gt;3)-diNAcBac-PP-undecaprenol alpha-1,4-N-acetyl-D-galactosaminyltransferase from Campylobacter jejuni subsp. jejuni serotype O:2 (strain ATCC 700819 / NCTC 11168).